A 200-amino-acid polypeptide reads, in one-letter code: Probable molybdenum cofactor guanylyltransferase (200 aa).

GTP contacts are provided by residues 9–11 (LAG), K21, D69, and D100. Position 100 (D100) interacts with Mg(2+).

The protein belongs to the MobA family. Requires Mg(2+) as cofactor.

It is found in the cytoplasm. The catalysed reaction is Mo-molybdopterin + GTP + H(+) = Mo-molybdopterin guanine dinucleotide + diphosphate. In terms of biological role, transfers a GMP moiety from GTP to Mo-molybdopterin (Mo-MPT) cofactor (Moco or molybdenum cofactor) to form Mo-molybdopterin guanine dinucleotide (Mo-MGD) cofactor. The sequence is that of Probable molybdenum cofactor guanylyltransferase from Bacillus cereus (strain G9842).